Here is a 108-residue protein sequence, read N- to C-terminus: Thiosulfate sulfurtransferase GlpE (108 aa).

Positions 17-105 (HQGAAVLVDI…WHRHFPADVA (89 aa)) constitute a Rhodanese domain. The active-site Cysteine persulfide intermediate is the C65.

The protein belongs to the GlpE family.

The protein resides in the cytoplasm. It carries out the reaction thiosulfate + hydrogen cyanide = thiocyanate + sulfite + 2 H(+). It catalyses the reaction thiosulfate + [thioredoxin]-dithiol = [thioredoxin]-disulfide + hydrogen sulfide + sulfite + 2 H(+). In terms of biological role, transferase that catalyzes the transfer of sulfur from thiosulfate to thiophilic acceptors such as cyanide or dithiols. May function in a CysM-independent thiosulfate assimilation pathway by catalyzing the conversion of thiosulfate to sulfite, which can then be used for L-cysteine biosynthesis. This is Thiosulfate sulfurtransferase GlpE from Salmonella arizonae (strain ATCC BAA-731 / CDC346-86 / RSK2980).